A 785-amino-acid polypeptide reads, in one-letter code: E3 UFM1-protein ligase 1 homolog (785 aa).

The segment at 404–483 is disordered; the sequence is GGNASNQLDD…GGGGSNKKSV (80 aa).

It belongs to the UFL1 family.

E3 UFM1-protein ligase that mediates ufmylation of target proteins. This is E3 UFM1-protein ligase 1 homolog from Drosophila willistoni (Fruit fly).